The chain runs to 672 residues: Glycerophosphocholine phosphodiesterase GPCPD1 (672 aa).

Positions 1–113 constitute a CBM20 domain; that stretch reads MTPSQVTFEI…IIIDDGQFGI (113 aa). Residues arginine 68 and 86 to 87 contribute to the substrate site; that span reads HK. Serine 175 carries the post-translational modification Phosphoserine. The 301-residue stretch at 318–618 folds into the GP-PDE domain; the sequence is PLDVGHRGAG…DRIYDWMPEQ (301 aa). Tyrosine 608 bears the Phosphotyrosine mark.

The protein belongs to the glycerophosphoryl diester phosphodiesterase family.

It is found in the cytoplasm. Its subcellular location is the cytosol. It catalyses the reaction sn-glycerol 3-phosphocholine + H2O = sn-glycerol 3-phosphate + choline + H(+). Functionally, may be involved in the negative regulation of skeletal muscle differentiation, independently of its glycerophosphocholine phosphodiesterase activity. In Rattus norvegicus (Rat), this protein is Glycerophosphocholine phosphodiesterase GPCPD1 (Gpcpd1).